We begin with the raw amino-acid sequence, 187 residues long: Potassium-transporting ATPase KdpC subunit (187 aa).

A helical transmembrane segment spans residues 10–30; sequence LVAATMLICVAGYSAAVWAVG.

The protein belongs to the KdpC family. The system is composed of three essential subunits: KdpA, KdpB and KdpC.

Its subcellular location is the cell inner membrane. Functionally, part of the high-affinity ATP-driven potassium transport (or Kdp) system, which catalyzes the hydrolysis of ATP coupled with the electrogenic transport of potassium into the cytoplasm. This subunit acts as a catalytic chaperone that increases the ATP-binding affinity of the ATP-hydrolyzing subunit KdpB by the formation of a transient KdpB/KdpC/ATP ternary complex. The protein is Potassium-transporting ATPase KdpC subunit of Parvibaculum lavamentivorans (strain DS-1 / DSM 13023 / NCIMB 13966).